The following is a 505-amino-acid chain: Alpha-1-syntrophin (505 aa).

2 disordered regions span residues Met1–Gly25 and Leu40–Leu77. 2 PH domains span residues Arg6–Asn269 and Asp293–His401. The PDZ domain occupies Arg87–Lys170. A phosphoserine mark is found at Ser101, Ser184, Ser189, Ser193, and Ser200. The interval Thr180–Ser210 is disordered. Positions Pro449–Ala505 constitute an SU domain. A calmodulin-binding region spans residues Pro483–Ala505.

It belongs to the syntrophin family. As to quaternary structure, monomer and homodimer. Interacts with the other members of the syntrophin family SNTB1 and SNTB2; SGCG and SGCA of the dystrophin glycoprotein complex; NOS1; GRB2; the sodium channel proteins SCN4A and SCN5A; F-actin and calmodulin. Interacts with dystrophin protein DMD and related proteins DTNA and UTRN and with MAPK12, TGFA and GA. Interacts with MYOC; regulates muscle hypertrophy. Interacts with DTNB. In terms of processing, phosphorylated by CaM-kinase II. Phosphorylation may inhibit the interaction with DMD. In terms of tissue distribution, high expression in skeletal muscle and heart. Low expression in brain, pancreas, liver, kidney and lung. Not detected in placenta.

The protein localises to the cell membrane. The protein resides in the sarcolemma. It localises to the cell junction. It is found in the cytoplasm. Its subcellular location is the cytoskeleton. Its function is as follows. Adapter protein that binds to and probably organizes the subcellular localization of a variety of membrane proteins. May link various receptors to the actin cytoskeleton and the extracellular matrix via the dystrophin glycoprotein complex. Plays an important role in synapse formation and in the organization of UTRN and acetylcholine receptors at the neuromuscular synapse. Binds to phosphatidylinositol 4,5-bisphosphate. This chain is Alpha-1-syntrophin (SNTA1), found in Homo sapiens (Human).